An 86-amino-acid polypeptide reads, in one-letter code: Putative membrane protein insertion efficiency factor (86 aa).

This sequence belongs to the UPF0161 family.

The protein localises to the cell inner membrane. Could be involved in insertion of integral membrane proteins into the membrane. The protein is Putative membrane protein insertion efficiency factor of Pasteurella multocida (strain Pm70).